We begin with the raw amino-acid sequence, 166 residues long: HTH-type transcriptional regulator PrsX (166 aa).

The region spanning 25 to 159 is the HTH marR-type domain; sequence EHLLMQLCIR…FEVINKKLLA (135 aa).

The protein resides in the cytoplasm. The chain is HTH-type transcriptional regulator PrsX (prsX) from Escherichia coli O6:H1 (strain CFT073 / ATCC 700928 / UPEC).